The primary structure comprises 403 residues: MKKFNKVILAYSGGLDTSIIIPWLKENYGCEVIAVVGNVGQSDELVGLKEKAIKTGASKIYIEDLTKEFVEDYIFPTIQAGAKYEGKYLLGTSFARPIIAKRLVEIAKLEGADAICHGCTGKGNDQVRFELAIKTFNPEMQIIAPWRTWEIKSREEEIQYAIDNEVPINITYETNYSKDKNLWHLSHEGLDLEFPENEPKYDKILELCNTLEKAPNEAEYITLGFEKGIATSLNGEKLDGVTLLQELNKIGGKHGIGVIDMVENRLVGMKSRGVYETPGGSILYKAHKDLEELCLDKETSHYKEIVSLKFADLVYNGQWFTPLREALSAFISKTQETVTGEIKLKLYKGNIINAGMTSPYSLYSEEYATFGEDGIYDQKDAEGFINLFSLPSIVQAKMAQKLN.

Ala10–Ser18 is a binding site for ATP. Positions 88 and 93 each coordinate L-citrulline. Gly118 provides a ligand contact to ATP. L-aspartate contacts are provided by Thr120, Asn124, and Asp125. An L-citrulline-binding site is contributed by Asn124. Residues Arg128, Ser177, Ser186, Glu263, and Tyr275 each coordinate L-citrulline.

The protein belongs to the argininosuccinate synthase family. Type 1 subfamily. In terms of assembly, homotetramer.

It is found in the cytoplasm. It carries out the reaction L-citrulline + L-aspartate + ATP = 2-(N(omega)-L-arginino)succinate + AMP + diphosphate + H(+). It functions in the pathway amino-acid biosynthesis; L-arginine biosynthesis; L-arginine from L-ornithine and carbamoyl phosphate: step 2/3. The polypeptide is Argininosuccinate synthase (Clostridium perfringens (strain ATCC 13124 / DSM 756 / JCM 1290 / NCIMB 6125 / NCTC 8237 / Type A)).